The sequence spans 264 residues: Caffeoyl-CoA O-methyltransferase 2 (264 aa).

A compositionally biased stretch (low complexity) spans 1–20 (MATTATEATKTTAPAQEQQA). The segment at 1 to 37 (MATTATEATKTTAPAQEQQANGNGNGEQKTRHSEVGH) is disordered. The span at 28 to 37 (QKTRHSEVGH) shows a compositional bias: basic and acidic residues. Lys-38 contributes to the substrate binding site. S-adenosyl-L-methionine contacts are provided by residues Thr-80, Glu-102, 104 to 105 (GV), Ser-110, Asp-128, and Ala-157. Residue Asp-180 participates in substrate binding. Asp-180 is a binding site for a divalent metal cation. Residue Asp-182 coordinates S-adenosyl-L-methionine. Asp-206 and Asn-207 together coordinate a divalent metal cation. Asn-211 is a substrate binding site.

This sequence belongs to the class I-like SAM-binding methyltransferase superfamily. Cation-dependent O-methyltransferase family. CCoAMT subfamily. The cofactor is a divalent metal cation.

The enzyme catalyses (E)-caffeoyl-CoA + S-adenosyl-L-methionine = (E)-feruloyl-CoA + S-adenosyl-L-homocysteine + H(+). It participates in aromatic compound metabolism; phenylpropanoid biosynthesis. Functionally, methylates caffeoyl-CoA to feruloyl-CoA and 5-hydroxyferuloyl-CoA to sinapoyl-CoA. Plays a role in the synthesis of feruloylated polysaccharides. Involved in the reinforcement of the plant cell wall. Also involved in the responding to wounding or pathogen challenge by the increased formation of cell wall-bound ferulic acid polymers. In Zea mays (Maize), this protein is Caffeoyl-CoA O-methyltransferase 2 (CCOAOMT2).